The following is a 136-amino-acid chain: Histone H3.1 (136 aa).

Positions 1-41 (MARTKQTARKSTGGKAPRKQLATKAARKSAPAAGGVKKPHR) are disordered. Lysine 5 is subject to N6,N6,N6-trimethyllysine; alternate. Lysine 5 carries the post-translational modification N6,N6-dimethyllysine; alternate. Lysine 5 and lysine 10 each carry N6-methyllysine; alternate. The residue at position 10 (lysine 10) is an N6-acetyllysine; alternate. Serine 11 carries the phosphoserine modification. Lysine 15 is subject to N6,N6-dimethyllysine; alternate. Residues lysine 15, lysine 19, lysine 24, lysine 28, and lysine 37 each carry the N6-acetyllysine; alternate modification. 4 positions are modified to N6-methyllysine; alternate: lysine 19, lysine 24, lysine 28, and lysine 37. Residues 22 to 33 (ATKAARKSAPAA) are compositionally biased toward low complexity. N6,N6,N6-trimethyllysine; alternate is present on residues lysine 28 and lysine 37. Residues lysine 28 and lysine 37 each carry the N6,N6-dimethyllysine; alternate modification. N6-acetyllysine occurs at positions 57 and 65. Lysine 80 bears the N6,N6,N6-trimethyllysine; alternate mark. An N6,N6-dimethyllysine; alternate modification is found at lysine 80. N6-methyllysine; alternate is present on lysine 80.

The protein belongs to the histone H3 family. As to quaternary structure, the nucleosome is a histone octamer containing two molecules each of H2A, H2B, H3 and H4 assembled in one H3-H4 heterotetramer and two H2A-H2B heterodimers. The octamer wraps approximately 147 bp of DNA. Post-translationally, phosphorylated to form H3S10ph. H3S10ph promotes subsequent H3K14ac formation and is required for transcriptional activation through TBP recruitment to the promoters. Mono-, di- and trimethylated by the COMPASS complex to form H3K4me1/2/3. H3K4me activates gene expression by regulating transcription elongation and plays a role in telomere length maintenance. H3K4me enrichment correlates with transcription levels, and occurs in a 5' to 3' gradient with H3K4me3 enrichment at the 5'-end of genes, shifting to H3K4me2 and then H3K4me1. Methylated by SET2 to form H3K36me. H3K36me represses gene expression. Methylated by DOT1 to form H3K79me. H3K79me is required for association of SIR proteins with telomeric regions and for telomeric silencing. The COMPASS-mediated formation of H3K4me2/3 and the DOT1-mediated formation of H3K79me require H2BK123ub1. In terms of processing, acetylation of histone H3 leads to transcriptional activation. H3K14ac formation by GCN5 is promoted by H3S10ph. H3K14ac can also be formed by ESA1. H3K56ac formation occurs predominantly in newly synthesized H3 molecules during G1, S and G2/M of the cell cycle and may be involved in DNA repair.

The protein resides in the nucleus. Its subcellular location is the chromosome. Core component of nucleosome. Nucleosomes wrap and compact DNA into chromatin, limiting DNA accessibility to the cellular machineries which require DNA as a template. Histones thereby play a central role in transcription regulation, DNA repair, DNA replication and chromosomal stability. DNA accessibility is regulated via a complex set of post-translational modifications of histones, also called histone code, and nucleosome remodeling. The sequence is that of Histone H3.1 (HHT1) from Mycosarcoma maydis (Corn smut fungus).